Reading from the N-terminus, the 157-residue chain is UPF0225 protein PA1039 (157 aa).

It belongs to the UPF0225 family.

The polypeptide is UPF0225 protein PA1039 (Pseudomonas aeruginosa (strain ATCC 15692 / DSM 22644 / CIP 104116 / JCM 14847 / LMG 12228 / 1C / PRS 101 / PAO1)).